The sequence spans 828 residues: Periplasmic nitrate reductase (828 aa).

A signal peptide (tat-type signal) is located at residues 1-31 (MKLSRRSFMKANAVAAAAAAAGLSVPGVARA). One can recognise a 4Fe-4S Mo/W bis-MGD-type domain in the interval 39 to 95 (IKWDKAPCRFCGTGCGVLVGTQQGRVVACQGDPDAPVNRGLNCIKGYFLPKIMYGKD). Residues cysteine 46, cysteine 49, cysteine 53, and cysteine 81 each contribute to the [4Fe-4S] cluster site. Mo-bis(molybdopterin guanine dinucleotide) contacts are provided by residues lysine 83, glutamine 150, asparagine 175, cysteine 179, 212–219 (WGSNMAEM), 243–247 (STFQH), 262–264 (QSD), methionine 372, glutamine 376, asparagine 482, 508–509 (SD), lysine 531, aspartate 558, and 718–727 (TGRVLEHWHT). Substrate is bound at residue phenylalanine 794. 2 residues coordinate Mo-bis(molybdopterin guanine dinucleotide): asparagine 802 and lysine 819.

This sequence belongs to the prokaryotic molybdopterin-containing oxidoreductase family. NasA/NapA/NarB subfamily. As to quaternary structure, component of the periplasmic nitrate reductase NapAB complex composed of NapA and NapB. [4Fe-4S] cluster is required as a cofactor. The cofactor is Mo-bis(molybdopterin guanine dinucleotide). Predicted to be exported by the Tat system. The position of the signal peptide cleavage has not been experimentally proven.

It localises to the periplasm. It catalyses the reaction 2 Fe(II)-[cytochrome] + nitrate + 2 H(+) = 2 Fe(III)-[cytochrome] + nitrite + H2O. Its function is as follows. Catalytic subunit of the periplasmic nitrate reductase complex NapAB. Receives electrons from NapB and catalyzes the reduction of nitrate to nitrite. The sequence is that of Periplasmic nitrate reductase from Salmonella agona (strain SL483).